A 221-amino-acid polypeptide reads, in one-letter code: Endo-1,4-beta-xylanase I (221 aa).

Residues 1-30 (MVSFTSIITAAVAATGALAAPATDVSLVAR) form the signal peptide. Residues 31–219 (QNTPNGEGTH…STGNAQITVN (189 aa)) enclose the GH11 domain. Glu-115 functions as the Nucleophile in the catalytic mechanism. Residues 126–157 (DPSSQSQNKGTVTSDGSSYKIAQSTRTNQPSI) are disordered. Glu-206 serves as the catalytic Proton donor.

It belongs to the glycosyl hydrolase 11 (cellulase G) family. In terms of processing, the N-terminus is blocked.

It is found in the secreted. It catalyses the reaction Endohydrolysis of (1-&gt;4)-beta-D-xylosidic linkages in xylans.. It functions in the pathway glycan degradation; xylan degradation. Its function is as follows. Major xylan-degrading enzyme. Contributes to the hydrolysis of arabinoxylan, the major component of maize cell-walls. The chain is Endo-1,4-beta-xylanase I (XYL1) from Cochliobolus carbonum (Maize leaf spot fungus).